Reading from the N-terminus, the 631-residue chain is Chaperone protein HtpG (631 aa).

Positions 1 to 339 (MSTNQETRGF…SNDLPLNVSR (339 aa)) are a; substrate-binding. The segment at 340–555 (EILQDNKVTS…DDQMTTQMAK (216 aa)) is b. The c stretch occupies residues 556 to 631 (LFAAAGQAMP…NTLLSKLTSH (76 aa)).

It belongs to the heat shock protein 90 family. Homodimer.

The protein resides in the cytoplasm. In terms of biological role, molecular chaperone. Has ATPase activity. The polypeptide is Chaperone protein HtpG (Pasteurella multocida (strain Pm70)).